Here is a 151-residue protein sequence, read N- to C-terminus: Deoxyuridine 5'-triphosphate nucleotidohydrolase (151 aa).

Substrate contacts are provided by residues 70–72 (RSG), asparagine 83, and 87–89 (TID).

The protein belongs to the dUTPase family. Requires Mg(2+) as cofactor.

It catalyses the reaction dUTP + H2O = dUMP + diphosphate + H(+). It participates in pyrimidine metabolism; dUMP biosynthesis; dUMP from dCTP (dUTP route): step 2/2. Its function is as follows. This enzyme is involved in nucleotide metabolism: it produces dUMP, the immediate precursor of thymidine nucleotides and it decreases the intracellular concentration of dUTP so that uracil cannot be incorporated into DNA. This chain is Deoxyuridine 5'-triphosphate nucleotidohydrolase, found in Ruegeria pomeroyi (strain ATCC 700808 / DSM 15171 / DSS-3) (Silicibacter pomeroyi).